The chain runs to 188 residues: Trafficking protein particle complex subunit 5 (188 aa).

Ser10 carries the post-translational modification Phosphoserine.

Belongs to the TRAPP small subunits family. BET3 subfamily. Component of the multisubunit TRAPP (transport protein particle) complex, which includes at least TRAPPC2, TRAPPC2L, TRAPPC3, TRAPPC3L, TRAPPC4, TRAPPC5, TRAPPC8, TRAPPC9, TRAPPC10, TRAPPC11 and TRAPPC12.

The protein resides in the golgi apparatus. The protein localises to the cis-Golgi network. Its subcellular location is the endoplasmic reticulum. Functionally, may play a role in vesicular transport from endoplasmic reticulum to Golgi. The sequence is that of Trafficking protein particle complex subunit 5 (Trappc5) from Mus musculus (Mouse).